The chain runs to 290 residues: NAD kinase (290 aa).

The Proton acceptor role is filled by Asp-72. Residues 72–73 (DG), Lys-77, 145–146 (NE), Asp-175, 186–191 (TAYSLS), and Ala-210 contribute to the NAD(+) site.

Belongs to the NAD kinase family. It depends on a divalent metal cation as a cofactor.

The protein localises to the cytoplasm. The catalysed reaction is NAD(+) + ATP = ADP + NADP(+) + H(+). Functionally, involved in the regulation of the intracellular balance of NAD and NADP, and is a key enzyme in the biosynthesis of NADP. Catalyzes specifically the phosphorylation on 2'-hydroxyl of the adenosine moiety of NAD to yield NADP. The sequence is that of NAD kinase from Bacteroides fragilis (strain YCH46).